A 99-amino-acid polypeptide reads, in one-letter code: SAGA-associated factor 11 (99 aa).

The SGF11-type zinc-finger motif lies at 71–92 (FYCENCGREVSGNRFAAHLQRC).

It belongs to the SGF11 family. In terms of assembly, component of the 1.8 MDa SAGA transcription coactivator-HAT complex. SAGA is built of 5 distinct domains with specialized functions. Within the SAGA complex, SUS1, SGF11, SGF73 and UBP8 form an additional subcomplex of SAGA called the DUB module (deubiquitination module). Interacts directly with SGF73, SUS1 and UBP8.

It localises to the nucleus. Functionally, functions as a component of the transcription regulatory histone acetylation (HAT) complex SAGA. At the promoters, SAGA is required for recruitment of the basal transcription machinery. It influences RNA polymerase II transcriptional activity through different activities such as TBP interaction and promoter selectivity, interaction with transcription activators, and chromatin modification through histone acetylation and deubiquitination. SAGA acetylates nucleosomal histone H3 to some extent (to form H3K9ac, H3K14ac, H3K18ac and H3K23ac). SAGA interacts with DNA via upstream activating sequences (UASs). Involved in transcriptional regulation of a subset of SAGA-regulated genes. Within the SAGA complex, participates in a subcomplex, that specifically deubiquitinates histones H2B. This chain is SAGA-associated factor 11, found in Candida glabrata (strain ATCC 2001 / BCRC 20586 / JCM 3761 / NBRC 0622 / NRRL Y-65 / CBS 138) (Yeast).